The chain runs to 360 residues: NAD(P)H-quinone oxidoreductase subunit 1, chloroplastic (360 aa).

8 helical membrane passes run 30 to 50 (FLPI…LVWL), 98 to 118 (FSIG…VIPF), 127 to 147 (FNIG…GLLM), 165 to 185 (AAQS…ISLL), 203 to 223 (FWGW…ISSL), 248 to 268 (YSGI…LISS), 297 to 317 (IFGT…FLFI), and 340 to 360 (FLLP…VFSL).

The protein belongs to the complex I subunit 1 family. As to quaternary structure, NDH is composed of at least 16 different subunits, 5 of which are encoded in the nucleus.

The protein localises to the plastid. It localises to the chloroplast thylakoid membrane. The enzyme catalyses a plastoquinone + NADH + (n+1) H(+)(in) = a plastoquinol + NAD(+) + n H(+)(out). It carries out the reaction a plastoquinone + NADPH + (n+1) H(+)(in) = a plastoquinol + NADP(+) + n H(+)(out). Functionally, NDH shuttles electrons from NAD(P)H:plastoquinone, via FMN and iron-sulfur (Fe-S) centers, to quinones in the photosynthetic chain and possibly in a chloroplast respiratory chain. The immediate electron acceptor for the enzyme in this species is believed to be plastoquinone. Couples the redox reaction to proton translocation, and thus conserves the redox energy in a proton gradient. This chain is NAD(P)H-quinone oxidoreductase subunit 1, chloroplastic, found in Aethionema grandiflorum (Persian stone-cress).